Reading from the N-terminus, the 388-residue chain is Formate-dependent phosphoribosylglycinamide formyltransferase (388 aa).

N(1)-(5-phospho-beta-D-ribosyl)glycinamide is bound by residues 20–21 (EL) and Glu80. ATP is bound by residues Arg112, Lys153, 158 to 163 (SSGKGQ), 193 to 196 (EEFI), and Glu201. In terms of domain architecture, ATP-grasp spans 117–306 (RLAFEKLGLR…EFEIHARAIL (190 aa)). Mg(2+) contacts are provided by Glu265 and Glu277. N(1)-(5-phospho-beta-D-ribosyl)glycinamide contacts are provided by residues Asp284, Lys352, and 359-360 (RR).

This sequence belongs to the PurK/PurT family. As to quaternary structure, homodimer.

The enzyme catalyses N(1)-(5-phospho-beta-D-ribosyl)glycinamide + formate + ATP = N(2)-formyl-N(1)-(5-phospho-beta-D-ribosyl)glycinamide + ADP + phosphate + H(+). Its pathway is purine metabolism; IMP biosynthesis via de novo pathway; N(2)-formyl-N(1)-(5-phospho-D-ribosyl)glycinamide from N(1)-(5-phospho-D-ribosyl)glycinamide (formate route): step 1/1. Involved in the de novo purine biosynthesis. Catalyzes the transfer of formate to 5-phospho-ribosyl-glycinamide (GAR), producing 5-phospho-ribosyl-N-formylglycinamide (FGAR). Formate is provided by PurU via hydrolysis of 10-formyl-tetrahydrofolate. This is Formate-dependent phosphoribosylglycinamide formyltransferase from Methanococcus maripaludis (strain C5 / ATCC BAA-1333).